Here is a 400-residue protein sequence, read N- to C-terminus: Double C2-like domain-containing protein alpha (400 aa).

An interaction with UNC13D and DYNLT1 region spans residues 1 to 89; sequence MRGRRGDRMT…DSYDSDDATA (89 aa). C2 domains are found at residues 89–211 and 251–384; these read ALGT…HFNI and ERGR…ERWH. 9 residues coordinate Ca(2+): Asp-120, Asp-126, Asp-181, Asp-183, Asp-282, Asp-288, Asp-342, Asp-344, and Asp-350. Positions 215 to 400 are interaction with UNC13D; the sequence is RQVPLASPSS…PPAAGALSSA (186 aa).

As to quaternary structure, interacts (via N-terminus) with UNC13A. Interacts with cytoplasmic dynein light chain DYNLT1. Interacts with UNC13D. Ca(2+) serves as cofactor. In terms of tissue distribution, predominantly expressed in brain. Also expressed in testis.

The protein localises to the lysosome. Its subcellular location is the cytoplasmic vesicle. The protein resides in the secretory vesicle. It localises to the synaptic vesicle membrane. It is found in the synapse. The protein localises to the synaptosome. Its function is as follows. Calcium sensor which most probably regulates fusion of vesicles with membranes. Binds calcium and phospholipids. May be involved in calcium dependent neurotransmitter release through the interaction with UNC13A. May be involved in calcium-dependent spontaneous release of neurotransmitter in absence of action potentials in neuronal cells. Regulates Ca(2+)-dependent secretory lysosome exocytosis in mast cells. The chain is Double C2-like domain-containing protein alpha (DOC2A) from Homo sapiens (Human).